A 732-amino-acid polypeptide reads, in one-letter code: Elongation factor 2 (732 aa).

Residues 19-230 enclose the tr-type G domain; the sequence is ERIRNMGIAA…VSFKDIIDLT (212 aa). GTP contacts are provided by residues 28-35, 94-98, and 148-151; these read AHIDHGKT, DTPGH, and NKVD. A Diphthamide modification is found at histidine 597.

It belongs to the TRAFAC class translation factor GTPase superfamily. Classic translation factor GTPase family. EF-G/EF-2 subfamily.

The protein localises to the cytoplasm. Functionally, catalyzes the GTP-dependent ribosomal translocation step during translation elongation. During this step, the ribosome changes from the pre-translocational (PRE) to the post-translocational (POST) state as the newly formed A-site-bound peptidyl-tRNA and P-site-bound deacylated tRNA move to the P and E sites, respectively. Catalyzes the coordinated movement of the two tRNA molecules, the mRNA and conformational changes in the ribosome. This Thermococcus sibiricus (strain DSM 12597 / MM 739) protein is Elongation factor 2.